The following is a 579-amino-acid chain: Zinc finger protein 384 (579 aa).

A disordered region spans residues 171 to 198 (TLTEEGGGGGGGGGTVAPPKPPRGRKKK). The segment covering 175-185 (EGGGGGGGGGT) has biased composition (gly residues). C2H2-type zinc fingers lie at residues 229 to 251 (YRCR…SKSH), 257 to 279 (HKCP…IRIH), 285 to 307 (YSCN…TRIH), 318 to 340 (HKCP…LRIH), 346 to 368 (YNCS…TRIH), 374 to 398 (YKCA…RRQH), 404 to 426 (FKCH…LSTH), and 434 to 456 (YTCT…MRKH). Low complexity predominate over residues 500-513 (QAQASQASQQQQQQ). The disordered stretch occupies residues 500–553 (QAQASQASQQQQQQQPPPPQPPHFQSPGAAPQGGGGGDSNQNPPPQCSFDLTPY). Residues 514 to 523 (QPPPPQPPHF) are compositionally biased toward pro residues.

It belongs to the krueppel C2H2-type zinc-finger protein family. In terms of assembly, interacts with BCAR1. In terms of tissue distribution, expressed in osteocytes, osteoblasts, and chondrocytes in bone.

It is found in the nucleus. Functionally, transcription factor that binds the consensus DNA sequence [GC]AAAAA. Seems to bind and regulate the promoters of MMP1, MMP3, MMP7 and COL1A1. The polypeptide is Zinc finger protein 384 (Znf384) (Rattus norvegicus (Rat)).